Here is a 121-residue protein sequence, read N- to C-terminus: Large ribosomal subunit protein uL18 (121 aa).

This sequence belongs to the universal ribosomal protein uL18 family. As to quaternary structure, part of the 50S ribosomal subunit; part of the 5S rRNA/L5/L18/L25 subcomplex. Contacts the 5S and 23S rRNAs.

Its function is as follows. This is one of the proteins that bind and probably mediate the attachment of the 5S RNA into the large ribosomal subunit, where it forms part of the central protuberance. In Spiroplasma kunkelii, this protein is Large ribosomal subunit protein uL18.